We begin with the raw amino-acid sequence, 78 residues long: ATP synthase subunit c (78 aa).

2 helical membrane passes run 11 to 31 and 53 to 73; these read FIGAGLAAIGSGAAAIGVGHV and LFIGIAFAEALGIFAFLVALL.

Belongs to the ATPase C chain family. F-type ATPases have 2 components, F(1) - the catalytic core - and F(0) - the membrane proton channel. F(1) has five subunits: alpha(3), beta(3), gamma(1), delta(1), epsilon(1). F(0) has four main subunits: a(1), b(1), b'(1) and c(10-14). The alpha and beta chains form an alternating ring which encloses part of the gamma chain. F(1) is attached to F(0) by a central stalk formed by the gamma and epsilon chains, while a peripheral stalk is formed by the delta, b and b' chains.

The protein localises to the cell inner membrane. In terms of biological role, f(1)F(0) ATP synthase produces ATP from ADP in the presence of a proton or sodium gradient. F-type ATPases consist of two structural domains, F(1) containing the extramembraneous catalytic core and F(0) containing the membrane proton channel, linked together by a central stalk and a peripheral stalk. During catalysis, ATP synthesis in the catalytic domain of F(1) is coupled via a rotary mechanism of the central stalk subunits to proton translocation. Functionally, key component of the F(0) channel; it plays a direct role in translocation across the membrane. A homomeric c-ring of between 10-14 subunits forms the central stalk rotor element with the F(1) delta and epsilon subunits. The sequence is that of ATP synthase subunit c from Jannaschia sp. (strain CCS1).